Consider the following 160-residue polypeptide: SsrA-binding protein (160 aa).

It belongs to the SmpB family.

Its subcellular location is the cytoplasm. Its function is as follows. Required for rescue of stalled ribosomes mediated by trans-translation. Binds to transfer-messenger RNA (tmRNA), required for stable association of tmRNA with ribosomes. tmRNA and SmpB together mimic tRNA shape, replacing the anticodon stem-loop with SmpB. tmRNA is encoded by the ssrA gene; the 2 termini fold to resemble tRNA(Ala) and it encodes a 'tag peptide', a short internal open reading frame. During trans-translation Ala-aminoacylated tmRNA acts like a tRNA, entering the A-site of stalled ribosomes, displacing the stalled mRNA. The ribosome then switches to translate the ORF on the tmRNA; the nascent peptide is terminated with the 'tag peptide' encoded by the tmRNA and targeted for degradation. The ribosome is freed to recommence translation, which seems to be the essential function of trans-translation. In Citrobacter koseri (strain ATCC BAA-895 / CDC 4225-83 / SGSC4696), this protein is SsrA-binding protein.